A 324-amino-acid chain; its full sequence is Elongation factor P--(R)-beta-lysine ligase (324 aa).

75-77 (SPE) contributes to the substrate binding site. Residues 99–101 (RNK) and N108 each bind ATP. Y117 contributes to the substrate binding site. An ATP-binding site is contributed by 243 to 244 (EL). Residue E250 participates in substrate binding. Position 299 (G299) interacts with ATP.

The protein belongs to the class-II aminoacyl-tRNA synthetase family. EpmA subfamily. In terms of assembly, homodimer.

The catalysed reaction is D-beta-lysine + L-lysyl-[protein] + ATP = N(6)-((3R)-3,6-diaminohexanoyl)-L-lysyl-[protein] + AMP + diphosphate + H(+). Its function is as follows. With EpmB is involved in the beta-lysylation step of the post-translational modification of translation elongation factor P (EF-P). Catalyzes the ATP-dependent activation of (R)-beta-lysine produced by EpmB, forming a lysyl-adenylate, from which the beta-lysyl moiety is then transferred to the epsilon-amino group of a conserved specific lysine residue in EF-P. The sequence is that of Elongation factor P--(R)-beta-lysine ligase from Buchnera aphidicola subsp. Acyrthosiphon pisum (strain 5A).